Consider the following 172-residue polypeptide: Calcium channel flower homolog (172 aa).

Topologically, residues 1 to 32 are cytoplasmic; that stretch reads MSSSGGAPGASASSAPPAQEEGMTWWYRWLCR. Residues 33–53 traverse the membrane as a helical segment; sequence LSGVLGAVSCAISGLFNCITI. Topologically, residues 54 to 57 are extracellular; sequence HPLN. A helical membrane pass occupies residues 58–78; that stretch reads IAAGVWMIMNAFILLLCEAPF. Topologically, residues 79–102 are cytoplasmic; that stretch reads CCQFIEFANTVAEKVDRLRSWQKA. A helical membrane pass occupies residues 103–123; sequence VFYCGMAVVPIVISLTLTTLL. The Extracellular segment spans residues 124 to 125; the sequence is GN. The helical transmembrane segment at 126-142 threads the bilayer; sequence AIAFATGVLYGLSALGK. The Cytoplasmic segment spans residues 143–172; that stretch reads KGDAISYARIQQQRQQADEEKLAETLEGEL.

This sequence belongs to the calcium channel flower family. In terms of assembly, interacts with adaptor protein complex 2 (AP-2). Detected in skin cells at low levels of expression (at protein level).

It is found in the cell membrane. Its subcellular location is the cytoplasmic vesicle. The protein localises to the secretory vesicle. It localises to the synaptic vesicle. The protein resides in the golgi apparatus. It is found in the vesicle. Its subcellular location is the early endosome. The protein localises to the recycling endosome. It localises to the endoplasmic reticulum membrane. Functionally, transmembrane protein which mediates synaptic endocytosis and fitness-based cell culling. In response to different stimulus strengths, controls two major modes of synaptic vesicle (SV) retrieval in hippocampal neurons; Clathrin-mediated endocytosis (CME) in response to mild stimulation and activity-dependent bulk endocytosis (ADBE) in response to strong stimulation. In cytotoxic T-lymphoocytes (CTLs) facilitates calcium-dependent endocytosis of cytotoxic granules at the immuno synapse. Different isoforms work as fitness fingerprints in 'loser' and 'winner' cells and thereby mediate win/lose decisions as part of the cell competition process. Its function is as follows. Functions with the other flower isoforms to produce tissue-specific fitness fingerprints that identify unfit or fit cells during cell selection processes in order to maintain tissue health. During cell competition, if levels of this isoform in cells is higher than in the surrounding neighboring cells, the cells are recognized as 'winner' cells, and do not undergo elimination via apoptosis. Functions with the other flower isoforms to produce tissue-specific fitness fingerprints that identify unfit or fit cells during cell selection processes in order to maintain tissue health. During cell competition, if levels of this isoform in unfit cells is higher than in the surrounding neighboring cells, the cells are recognized as 'loser' cells, and undergo elimination via apoptosis to be replaced by the surrounding healthy 'winner' cell population. In Homo sapiens (Human), this protein is Calcium channel flower homolog (CACFD1).